The sequence spans 390 residues: Probable tRNA sulfurtransferase (390 aa).

In terms of domain architecture, THUMP spans 58-161 (EAVARRLQRV…DEGAYIYSRI (104 aa)). ATP-binding positions include 179-180 (LI), 204-205 (HF), arginine 261, glycine 283, and glutamine 292.

The protein belongs to the ThiI family.

The protein localises to the cytoplasm. It catalyses the reaction [ThiI sulfur-carrier protein]-S-sulfanyl-L-cysteine + a uridine in tRNA + 2 reduced [2Fe-2S]-[ferredoxin] + ATP + H(+) = [ThiI sulfur-carrier protein]-L-cysteine + a 4-thiouridine in tRNA + 2 oxidized [2Fe-2S]-[ferredoxin] + AMP + diphosphate. The enzyme catalyses [ThiS sulfur-carrier protein]-C-terminal Gly-Gly-AMP + S-sulfanyl-L-cysteinyl-[cysteine desulfurase] + AH2 = [ThiS sulfur-carrier protein]-C-terminal-Gly-aminoethanethioate + L-cysteinyl-[cysteine desulfurase] + A + AMP + 2 H(+). It functions in the pathway cofactor biosynthesis; thiamine diphosphate biosynthesis. Its function is as follows. Catalyzes the ATP-dependent transfer of a sulfur to tRNA to produce 4-thiouridine in position 8 of tRNAs, which functions as a near-UV photosensor. Also catalyzes the transfer of sulfur to the sulfur carrier protein ThiS, forming ThiS-thiocarboxylate. This is a step in the synthesis of thiazole, in the thiamine biosynthesis pathway. The sulfur is donated as persulfide by IscS. In Moorella thermoacetica (strain ATCC 39073 / JCM 9320), this protein is Probable tRNA sulfurtransferase.